The primary structure comprises 159 residues: Phosphopantetheine adenylyltransferase (159 aa).

Position 10 (Thr10) interacts with substrate. ATP is bound by residues 10 to 11 (TF) and His18. Positions 42, 74, and 88 each coordinate substrate. ATP-binding positions include 89–91 (GMR), Glu99, and 124–130 (WSYVSST).

The protein belongs to the bacterial CoaD family. In terms of assembly, homohexamer. Requires Mg(2+) as cofactor.

The protein localises to the cytoplasm. It catalyses the reaction (R)-4'-phosphopantetheine + ATP + H(+) = 3'-dephospho-CoA + diphosphate. It participates in cofactor biosynthesis; coenzyme A biosynthesis; CoA from (R)-pantothenate: step 4/5. Functionally, reversibly transfers an adenylyl group from ATP to 4'-phosphopantetheine, yielding dephospho-CoA (dPCoA) and pyrophosphate. This Mannheimia succiniciproducens (strain KCTC 0769BP / MBEL55E) protein is Phosphopantetheine adenylyltransferase.